A 363-amino-acid chain; its full sequence is Putative RAD2-like endonuclease 095R (363 aa).

This sequence belongs to the XPG/RAD2 endonuclease family. Mg(2+) serves as cofactor.

The protein localises to the host nucleus. Functionally, probable endonuclease. The sequence is that of Putative RAD2-like endonuclease 095R from Frog virus 3 (isolate Goorha) (FV-3).